Here is a 25-residue protein sequence, read N- to C-terminus: Acyl carrier protein (25 aa).

Residues Glu-2–Ala-25 form the Carrier domain.

This sequence belongs to the acyl carrier protein (ACP) family. Post-translationally, 4'-phosphopantetheine is transferred from CoA to a specific serine of apo-ACP by AcpS. This modification is essential for activity because fatty acids are bound in thioester linkage to the sulfhydryl of the prosthetic group.

The protein resides in the cytoplasm. It functions in the pathway lipid metabolism; fatty acid biosynthesis. Its function is as follows. Carrier of the growing fatty acid chain in fatty acid biosynthesis. The protein is Acyl carrier protein (acpP) of Alcaligenes faecalis.